Consider the following 221-residue polypeptide: Probable GTP-binding protein EngB (221 aa).

The 183-residue stretch at 37-219 (QGIEIALAGR…RAAIVKLLRE (183 aa)) folds into the EngB-type G domain. GTP contacts are provided by residues 45-52 (GRSNVGKS), 72-76 (GRTQE), 97-100 (DMPG), 164-167 (TKTD), and 198-200 (TSS). Mg(2+) is bound by residues Ser52 and Thr74.

This sequence belongs to the TRAFAC class TrmE-Era-EngA-EngB-Septin-like GTPase superfamily. EngB GTPase family. Mg(2+) is required as a cofactor.

Its function is as follows. Necessary for normal cell division and for the maintenance of normal septation. In Afipia carboxidovorans (strain ATCC 49405 / DSM 1227 / KCTC 32145 / OM5) (Oligotropha carboxidovorans), this protein is Probable GTP-binding protein EngB.